The primary structure comprises 285 residues: Energy-coupling factor transporter ATP-binding protein EcfA2 (285 aa).

Residues 3-245 form the ABC transporter domain; it reads IKFKKVDYIY…RKWLKKHNLS (243 aa). Position 40 to 47 (40 to 47) interacts with ATP; sequence GHTGSGKS.

It belongs to the ABC transporter superfamily. Energy-coupling factor EcfA family. As to quaternary structure, forms a stable energy-coupling factor (ECF) transporter complex composed of 2 membrane-embedded substrate-binding proteins (S component), 2 ATP-binding proteins (A component) and 2 transmembrane proteins (T component).

It localises to the cell membrane. Its function is as follows. ATP-binding (A) component of a common energy-coupling factor (ECF) ABC-transporter complex. Unlike classic ABC transporters this ECF transporter provides the energy necessary to transport a number of different substrates. In Lactobacillus acidophilus (strain ATCC 700396 / NCK56 / N2 / NCFM), this protein is Energy-coupling factor transporter ATP-binding protein EcfA2.